A 301-amino-acid chain; its full sequence is MGNSTESVITDYLVRIITREGNIRALACVTTNLVGDACRRHGTLPTASAALGRALTGGVLMGALLKTGQRIALTFEGNGPLKKIIVEADANGAVRGLVRNPAVSLLRDDGKLDVAGALGKAGFLTVSRDLGLKEPYTGTVMLYTSEIAEDLAWYLTESEQIPSAVGLGVYVEQDGSVAAAGGFLIQALPPGDDQLIDRIMERIASMPPVTEMLRAGATPEGLLEYLFDGIPFDILEKRATALVCSCSRERIERVLLSLGSDELSSLIHDQGEASVGCEFCGEHYNFTREELERLRDSLTAV.

Cystine bridges form between C244–C246 and C277–C280.

The protein belongs to the HSP33 family. Under oxidizing conditions two disulfide bonds are formed involving the reactive cysteines. Under reducing conditions zinc is bound to the reactive cysteines and the protein is inactive.

It localises to the cytoplasm. Functionally, redox regulated molecular chaperone. Protects both thermally unfolding and oxidatively damaged proteins from irreversible aggregation. Plays an important role in the bacterial defense system toward oxidative stress. This chain is 33 kDa chaperonin, found in Geobacter sulfurreducens (strain ATCC 51573 / DSM 12127 / PCA).